The sequence spans 67 residues: Large ribosomal subunit protein bL35 (67 aa).

This sequence belongs to the bacterial ribosomal protein bL35 family.

This is Large ribosomal subunit protein bL35 from Rhizobium etli (strain ATCC 51251 / DSM 11541 / JCM 21823 / NBRC 15573 / CFN 42).